A 445-amino-acid polypeptide reads, in one-letter code: Argininosuccinate synthase (445 aa).

ATP-binding positions include 17-25 (AFSGGLDTS) and alanine 43. L-citrulline is bound at residue tyrosine 99. ATP-binding residues include glycine 129 and threonine 131. Positions 131, 135, and 136 each coordinate L-aspartate. Asparagine 135 provides a ligand contact to L-citrulline. ATP is bound at residue aspartate 136. Arginine 139 and serine 192 together coordinate L-citrulline. Position 194 (aspartate 194) interacts with ATP. L-citrulline is bound by residues threonine 201, glutamate 203, and glutamate 280.

The protein belongs to the argininosuccinate synthase family. Type 2 subfamily. As to quaternary structure, homotetramer.

The protein resides in the cytoplasm. It catalyses the reaction L-citrulline + L-aspartate + ATP = 2-(N(omega)-L-arginino)succinate + AMP + diphosphate + H(+). Its pathway is amino-acid biosynthesis; L-arginine biosynthesis; L-arginine from L-ornithine and carbamoyl phosphate: step 2/3. The chain is Argininosuccinate synthase from Rhodopseudomonas palustris (strain BisB5).